Consider the following 676-residue polypeptide: UvrABC system protein B (676 aa).

In terms of domain architecture, Helicase ATP-binding spans 26 to 414 (EGLDAGLAHQ…SAGEIADQVV (389 aa)). 39–46 (GVTGSGKT) lines the ATP pocket. Residues 92-115 (YYDYYQPEAYVPTTDTFIEKDSSV) carry the Beta-hairpin motif. Residues 432 to 598 (QVDDLLSEIR…ALKRNIKDIM (167 aa)) form the Helicase C-terminal domain. The UVR domain occupies 636–671 (EKEITKLEAQMYKHAQDLEFELAAQKRDEIEKLRQQ).

Belongs to the UvrB family. Forms a heterotetramer with UvrA during the search for lesions. Interacts with UvrC in an incision complex.

It is found in the cytoplasm. The UvrABC repair system catalyzes the recognition and processing of DNA lesions. A damage recognition complex composed of 2 UvrA and 2 UvrB subunits scans DNA for abnormalities. Upon binding of the UvrA(2)B(2) complex to a putative damaged site, the DNA wraps around one UvrB monomer. DNA wrap is dependent on ATP binding by UvrB and probably causes local melting of the DNA helix, facilitating insertion of UvrB beta-hairpin between the DNA strands. Then UvrB probes one DNA strand for the presence of a lesion. If a lesion is found the UvrA subunits dissociate and the UvrB-DNA preincision complex is formed. This complex is subsequently bound by UvrC and the second UvrB is released. If no lesion is found, the DNA wraps around the other UvrB subunit that will check the other stand for damage. This is UvrABC system protein B from Vibrio vulnificus (strain CMCP6).